A 162-amino-acid chain; its full sequence is Crossover junction endodeoxyribonuclease RuvC (162 aa).

Active-site residues include Asp-7, Glu-67, and Asp-140. Asp-7, Glu-67, and Asp-140 together coordinate Mg(2+).

The protein belongs to the RuvC family. As to quaternary structure, homodimer which binds Holliday junction (HJ) DNA. The HJ becomes 2-fold symmetrical on binding to RuvC with unstacked arms; it has a different conformation from HJ DNA in complex with RuvA. In the full resolvosome a probable DNA-RuvA(4)-RuvB(12)-RuvC(2) complex forms which resolves the HJ. Mg(2+) is required as a cofactor.

It localises to the cytoplasm. It carries out the reaction Endonucleolytic cleavage at a junction such as a reciprocal single-stranded crossover between two homologous DNA duplexes (Holliday junction).. The RuvA-RuvB-RuvC complex processes Holliday junction (HJ) DNA during genetic recombination and DNA repair. Endonuclease that resolves HJ intermediates. Cleaves cruciform DNA by making single-stranded nicks across the HJ at symmetrical positions within the homologous arms, yielding a 5'-phosphate and a 3'-hydroxyl group; requires a central core of homology in the junction. The consensus cleavage sequence is 5'-(A/T)TT(C/G)-3'. Cleavage occurs on the 3'-side of the TT dinucleotide at the point of strand exchange. HJ branch migration catalyzed by RuvA-RuvB allows RuvC to scan DNA until it finds its consensus sequence, where it cleaves and resolves the cruciform DNA. The polypeptide is Crossover junction endodeoxyribonuclease RuvC (Pseudothermotoga lettingae (strain ATCC BAA-301 / DSM 14385 / NBRC 107922 / TMO) (Thermotoga lettingae)).